A 253-amino-acid chain; its full sequence is MARRKKIYEGKAKILYEGPEPGTIVQYFKDDATAFNAEKKAVIEGKGVLNNRLSEFFMTGLGHIGVPTHFIKRLNMREQLVRSVDIIPLEIIVRNYAAGTMSKRLGLEEGTQLPRPIVEYCYKDDKLGDPLVTEEHIAAFGWASQQDMDDMLSLALRVNDFLSGLMFGVGIRLVDFKIEVGRVYDGDFQRLVVADEISPDSCRLWDIESGRKLDKDVFRRDLGDLADAYTEVAQRLGVMPKNATPITKPTLIN.

The protein belongs to the SAICAR synthetase family.

The enzyme catalyses 5-amino-1-(5-phospho-D-ribosyl)imidazole-4-carboxylate + L-aspartate + ATP = (2S)-2-[5-amino-1-(5-phospho-beta-D-ribosyl)imidazole-4-carboxamido]succinate + ADP + phosphate + 2 H(+). Its pathway is purine metabolism; IMP biosynthesis via de novo pathway; 5-amino-1-(5-phospho-D-ribosyl)imidazole-4-carboxamide from 5-amino-1-(5-phospho-D-ribosyl)imidazole-4-carboxylate: step 1/2. The protein is Phosphoribosylaminoimidazole-succinocarboxamide synthase of Roseobacter denitrificans (strain ATCC 33942 / OCh 114) (Erythrobacter sp. (strain OCh 114)).